A 235-amino-acid chain; its full sequence is Thiamine import ATP-binding protein ThiQ (235 aa).

The 229-residue stretch at 2–230 (LKLENLTYRY…TVPEAAILGM (229 aa)) folds into the ABC transporter domain. 32–39 (GPSGAGKS) is a binding site for ATP.

Belongs to the ABC transporter superfamily. Thiamine importer (TC 3.A.1.19.1) family. In terms of assembly, the complex is composed of two ATP-binding proteins (ThiQ), two transmembrane proteins (ThiP) and a solute-binding protein (ThiB).

The protein localises to the cell inner membrane. It catalyses the reaction thiamine(out) + ATP + H2O = thiamine(in) + ADP + phosphate + H(+). In terms of biological role, part of the ABC transporter complex ThiBPQ involved in thiamine import. Responsible for energy coupling to the transport system. This is Thiamine import ATP-binding protein ThiQ from Photorhabdus laumondii subsp. laumondii (strain DSM 15139 / CIP 105565 / TT01) (Photorhabdus luminescens subsp. laumondii).